The sequence spans 250 residues: UPF0494 membrane protein PB2B2.07c (250 aa).

3 helical membrane-spanning segments follow: residues tryptophan 98–valine 118, isoleucine 144–leucine 164, and methionine 179–isoleucine 199.

This sequence belongs to the UPF0494 family.

It localises to the cytoplasm. The protein localises to the endoplasmic reticulum. The protein resides in the golgi apparatus. It is found in the membrane. The sequence is that of UPF0494 membrane protein PB2B2.07c from Schizosaccharomyces pombe (strain 972 / ATCC 24843) (Fission yeast).